Reading from the N-terminus, the 199-residue chain is Phosphatidylethanolamine N-methyltransferase (199 aa).

Residues 1–12 (MSWLLGYMDPTE) lie on the Lumenal side of the membrane. Positions 13 to 33 (PSFVAAVITIVFNPLFWNVVA) form an intramembrane region, helical. Residues 34 to 45 (RWEQRTRKLSRA) lie on the Lumenal side of the membrane. A helical transmembrane segment spans residues 46 to 66 (FGSPHLACYSLGICILLLNIL). The Cytoplasmic segment spans residues 67–93 (RSHCFTQAMMSQPKMEGLDNHTTYFLG). Residues 94–114 (LAFLGWGFVFVLSSFYALGFT) form a helical membrane-spanning segment. Residue 98–100 (GWG) participates in S-adenosyl-L-methionine binding. The Lumenal portion of the chain corresponds to 115 to 157 (GTFLGDYFGILKESRVTTFPFSVLDNPMYWGSTANYLGWALMH). Residues 158 to 178 (ASPTGLLLTVLVAIVYVVALL) form a helical membrane-spanning segment. Topologically, residues 179-199 (YEEPFTAEIYRQKATRLHKRS) are cytoplasmic. 180–181 (EE) contacts S-adenosyl-L-methionine.

The protein belongs to the class VI-like SAM-binding methyltransferase superfamily. PEMT/PEM2 methyltransferase family. As to expression, expressed in liver (at protein level).

The protein resides in the endoplasmic reticulum membrane. It is found in the mitochondrion membrane. The enzyme catalyses a 1,2-diacyl-sn-glycero-3-phospho-N-methylethanolamine + S-adenosyl-L-methionine = a 1,2-diacyl-sn-glycero-3-phospho-N,N-dimethylethanolamine + S-adenosyl-L-homocysteine + H(+). The catalysed reaction is a 1,2-diacyl-sn-glycero-3-phospho-N,N-dimethylethanolamine + S-adenosyl-L-methionine = a 1,2-diacyl-sn-glycero-3-phosphocholine + S-adenosyl-L-homocysteine + H(+). It carries out the reaction a 1,2-diacyl-sn-glycero-3-phosphoethanolamine + S-adenosyl-L-methionine = a 1,2-diacyl-sn-glycero-3-phospho-N-methylethanolamine + S-adenosyl-L-homocysteine + H(+). It catalyses the reaction 1,2-di-(9Z-octadecenoyl)-sn-glycero-3-phosphoethanolamine + S-adenosyl-L-methionine = 1,2-di-(9Z-octadecenoyl)-sn-glycero-3-phospho-N-methylethanolamine + S-adenosyl-L-homocysteine + H(+). The enzyme catalyses 1,2-di-(9Z-octadecenoyl)-sn-glycero-3-phospho-N-methylethanolamine + S-adenosyl-L-methionine = 1,2-di-(9Z-octadecenoyl)-sn-glycero-3-phospho-N,N-dimethylethanolamine + S-adenosyl-L-homocysteine + H(+). The catalysed reaction is 1,2-di-(9Z-octadecenoyl)-sn-glycero-3-phospho-N,N-dimethylethanolamine + S-adenosyl-L-methionine = 1,2-di-(9Z-octadecenoyl)-sn-glycero-3-phosphocholine + S-adenosyl-L-homocysteine + H(+). It carries out the reaction 1,2-di-(9Z,12Z-octadecadienoyl)-sn-glycero-3-phosphoethanolamine + S-adenosyl-L-methionine = 1,2-di-(9Z,12Z-octadecadienoyl)-sn-glycero-3-phospho-N-methylethanolamine + S-adenosyl-L-homocysteine + H(+). It catalyses the reaction 1,2-di-(9Z,12Z-octadecadienoyl)-sn-glycero-3-phospho-N-methylethanolamine + S-adenosyl-L-methionine = 1,2-di-(9Z,12Z-octadecadienoyl)-sn-glycero-3-phospho-N,N-dimethylethanolamine + S-adenosyl-L-homocysteine + H(+). The enzyme catalyses 1,2-di-(9Z,12Z-octadecadienoyl)-sn-glycero-3-phospho-N,N-dimethylethanolamine + S-adenosyl-L-methionine = 1,2-di-(9Z,12Z-octadecadienoyl)-sn-glycero-3-phosphocholine + S-adenosyl-L-homocysteine + H(+). The catalysed reaction is 1,2-di-(9Z,12Z,15Z-octadecatrienoyl)-sn-glycero-3-phosphoethanolamine + S-adenosyl-L-methionine = 1,2-di-(9Z,12Z,15Z-octadecatrienoyl)-sn-glycero-3-phospho-N-methylethanolamine + S-adenosyl-L-homocysteine + H(+). It carries out the reaction 1,2-di-(9Z,12Z,15Z-octadecatrienoyl)-sn-glycero-3-phospho-N-methylethanolamine + S-adenosyl-L-methionine = 1,2-di-(9Z,12Z,15Z-octadecatrienoyl)-sn-glycero-3-phospho-N,N-dimethylethanolamine + S-adenosyl-L-homocysteine + H(+). It catalyses the reaction 1,2-di-(9Z,12Z,15Z-octadecatrienoyl)-sn-glycero-3-phospho-N,N-dimethylethanolamine + S-adenosyl-L-methionine = 1,2-di-(9Z,12Z,15Z-octadecatrienoyl)-sn-glycero-3-phosphocholine + S-adenosyl-L-homocysteine + H(+). The enzyme catalyses 1-hexadecanoyl-2-(4Z,7Z,10Z,13Z,16Z,19Z-docosahexaenoyl)-sn-glycero-3-phosphoethanolamine + S-adenosyl-L-methionine = 1-hexadecanoyl-2-(4Z,7Z,10Z,13Z,16Z,19Z-docosahexaenoyl)-sn-glycero-3-phospho-N-methylethanolamine + S-adenosyl-L-homocysteine + H(+). The catalysed reaction is 1-hexadecanoyl-2-(4Z,7Z,10Z,13Z,16Z,19Z-docosahexaenoyl)-sn-glycero-3-phospho-N-methylethanolamine + S-adenosyl-L-methionine = 1-hexadecanoyl-2-(4Z,7Z,10Z,13Z,16Z,19Z-docosahexaenoyl)-sn-glycero-3-phospho-N,N-dimethylethanolamine + S-adenosyl-L-homocysteine + H(+). It carries out the reaction 1-hexadecanoyl-2-(4Z,7Z,10Z,13Z,16Z,19Z-docosahexaenoyl)-sn-glycero-3-phospho-N,N-dimethylethanolamine + S-adenosyl-L-methionine = 1-hexadecanoyl-2-(4Z,7Z,10Z,13Z,16Z,19Z-docosahexaenoyl)-sn-glycero-3-phosphocholine + S-adenosyl-L-homocysteine + H(+). It participates in phospholipid metabolism; phosphatidylcholine biosynthesis. Its function is as follows. Catalyzes the three sequential steps of the methylation pathway for the biosynthesis of phosphatidylcholine, a critical and essential component for membrane structure. Uses S-adenosylmethionine (S-adenosyl-L-methionine, SAM or AdoMet) as the methyl group donor for the methylation of phosphatidylethanolamine (1,2-diacyl-sn-glycero-3-phosphoethanolamine, PE) to phosphatidylmonomethylethanolamine (1,2-diacyl-sn-glycero-3-phospho-N-methylethanolamine, PMME), PMME to phosphatidyldimethylethanolamine (1,2-diacyl-sn-glycero-3-phospho-N,N-dimethylethanolamine, PDME), and PDME to phosphatidylcholine (1,2-diacyl-sn-glycero-3-phosphocholine, PC), producing S-adenosyl-L-homocysteine in each step. In Mus musculus (Mouse), this protein is Phosphatidylethanolamine N-methyltransferase.